The following is a 503-amino-acid chain: D-xylose-proton symporter-like 1 (503 aa).

The interval 1 to 23 is disordered; that stretch reads MGFDPENQSISSVGQVVGDSSSG. A compositionally biased stretch (low complexity) spans 8–23; the sequence is QSISSVGQVVGDSSSG. Helical transmembrane passes span 51–73, 95–115, 129–149, 152–172, 190–210, 213–233, 305–325, 346–366, 374–394, 405–425, 437–457, and 467–487; these read FLFPALGALLFGYEIGATSCAIM, IITSGSLYGALIGSIVAFSVA, FLYLVGAIVTVVAPVFSILII, VTYGMGIGLTMHAAPMYIAET, VLGMVGGYGIGSLWITVISGW, MYATILPFPVIMGTGMCWLPA, ALTIAGGLVLFQQITGQPSVL, ISILLGLLKLVMTGVSVIVID, LLCGVSGMVISLFLLGSYYMF, ALLLYVGCYQLSFGPIGWLMI, GISLAVLVNFGANALVTFAFS, and ILFCAFGVICVVSLFFIYYIV.

Belongs to the major facilitator superfamily. Sugar transporter (TC 2.A.1.1) family.

The protein resides in the membrane. This chain is D-xylose-proton symporter-like 1, found in Arabidopsis thaliana (Mouse-ear cress).